The chain runs to 939 residues: Valine--tRNA ligase (939 aa).

Positions 47-57 (PNVTGILHMGH) match the 'HIGH' region motif. The 'KMSKS' region signature appears at 563–567 (KLSKS). Lys-566 is an ATP binding site. A coiled-coil region spans residues 873 to 939 (AEHLAKEHAR…QSILDKIASL (67 aa)).

The protein belongs to the class-I aminoacyl-tRNA synthetase family. ValS type 1 subfamily. Monomer.

Its subcellular location is the cytoplasm. It catalyses the reaction tRNA(Val) + L-valine + ATP = L-valyl-tRNA(Val) + AMP + diphosphate. In terms of biological role, catalyzes the attachment of valine to tRNA(Val). As ValRS can inadvertently accommodate and process structurally similar amino acids such as threonine, to avoid such errors, it has a 'posttransfer' editing activity that hydrolyzes mischarged Thr-tRNA(Val) in a tRNA-dependent manner. This is Valine--tRNA ligase from Chlamydia muridarum (strain MoPn / Nigg).